Reading from the N-terminus, the 447-residue chain is Probable alpha-galactosidase B (447 aa).

The first 22 residues, 1–22, serve as a signal peptide directing secretion; sequence MTTFLSLTTAAAVLTLARGSNA. 2 cysteine pairs are disulfide-bonded: Cys-45-Cys-77 and Cys-127-Cys-157. The active-site Nucleophile is Asp-155. Residues Asn-162 and Asn-180 are each glycosylated (N-linked (GlcNAc...) asparagine). 225 to 229 contributes to the substrate binding site; that stretch reads NWGQA. Asn-236 is a glycosylation site (N-linked (GlcNAc...) asparagine). Asp-247 serves as the catalytic Proton donor. N-linked (GlcNAc...) asparagine glycosylation occurs at Asn-286.

This sequence belongs to the glycosyl hydrolase 27 family.

The protein localises to the secreted. The enzyme catalyses Hydrolysis of terminal, non-reducing alpha-D-galactose residues in alpha-D-galactosides, including galactose oligosaccharides, galactomannans and galactolipids.. Functionally, hydrolyzes a variety of simple alpha-D-galactoside as well as more complex molecules such as oligosaccharides and polysaccharides. The chain is Probable alpha-galactosidase B (aglB) from Neosartorya fischeri (strain ATCC 1020 / DSM 3700 / CBS 544.65 / FGSC A1164 / JCM 1740 / NRRL 181 / WB 181) (Aspergillus fischerianus).